The following is a 103-amino-acid chain: NAD(P)H-quinone oxidoreductase subunit 4L, organellar chromatophore (103 aa).

3 consecutive transmembrane segments (helical) span residues Ile-3–Leu-23, Val-32–Asn-52, and Val-63–Leu-83.

The protein belongs to the complex I subunit 4L family. In terms of assembly, NDH is composed of at least 16 different subunits, 5 of which are encoded in the nucleus.

Its subcellular location is the plastid. The protein localises to the organellar chromatophore thylakoid membrane. It catalyses the reaction a plastoquinone + NADH + (n+1) H(+)(in) = a plastoquinol + NAD(+) + n H(+)(out). The catalysed reaction is a plastoquinone + NADPH + (n+1) H(+)(in) = a plastoquinol + NADP(+) + n H(+)(out). NDH shuttles electrons from NAD(P)H:plastoquinone, via FMN and iron-sulfur (Fe-S) centers, to quinones in the photosynthetic chain and possibly in a chloroplast respiratory chain. The immediate electron acceptor for the enzyme in this species is believed to be plastoquinone. Couples the redox reaction to proton translocation, and thus conserves the redox energy in a proton gradient. In Paulinella chromatophora, this protein is NAD(P)H-quinone oxidoreductase subunit 4L, organellar chromatophore.